Consider the following 143-residue polypeptide: Transcriptional regulator MraZ (143 aa).

SpoVT-AbrB domains follow at residues 5-47 and 76-119; these read TYTP…SARE and ASDE…DSES.

This sequence belongs to the MraZ family. In terms of assembly, forms oligomers.

The protein localises to the cytoplasm. It is found in the nucleoid. In Micrococcus luteus (strain ATCC 4698 / DSM 20030 / JCM 1464 / CCM 169 / CCUG 5858 / IAM 1056 / NBRC 3333 / NCIMB 9278 / NCTC 2665 / VKM Ac-2230) (Micrococcus lysodeikticus), this protein is Transcriptional regulator MraZ.